The chain runs to 437 residues: uncharacterized protein (437 aa).

Residues 63–87 (PSSANVSFQNSDDNLSTSRGRSASP) show a composition bias toward polar residues. Disordered stretches follow at residues 63–97 (PSSANVSFQNSDDNLSTSRGRSASPTPIRKFSNFP), 112–147 (VKKDQQTRNQLPPMKRLNSEEEEEQQGKTKTTKKET), and 346–437 (PKNA…YSIW). The span at 399-409 (EALSPSKSNPD) shows a compositional bias: polar residues. Residues 425 to 437 (KKPSSSSSNYSIW) are compositionally biased toward low complexity.

This is an uncharacterized protein from Caenorhabditis elegans.